The chain runs to 89 residues: Small ribosomal subunit protein uS15 (89 aa).

The protein belongs to the universal ribosomal protein uS15 family. In terms of assembly, part of the 30S ribosomal subunit. Forms a bridge to the 50S subunit in the 70S ribosome, contacting the 23S rRNA.

In terms of biological role, one of the primary rRNA binding proteins, it binds directly to 16S rRNA where it helps nucleate assembly of the platform of the 30S subunit by binding and bridging several RNA helices of the 16S rRNA. Forms an intersubunit bridge (bridge B4) with the 23S rRNA of the 50S subunit in the ribosome. The protein is Small ribosomal subunit protein uS15 of Roseobacter denitrificans (strain ATCC 33942 / OCh 114) (Erythrobacter sp. (strain OCh 114)).